A 1295-amino-acid polypeptide reads, in one-letter code: Phosphoribosylformylglycinamidine synthase (1295 aa).

The disordered stretch occupies residues 305-327; the sequence is WPGAATGSGGEIRDEGATGRGAK. ATP-binding positions include 307–318, 386–388, and Ala-678; these read GAATGSGGEIRD and TGY. Asp-679, Glu-718, Asn-722, and Asp-884 together coordinate Mg(2+). Residue Ser-886 coordinates ATP. The 255-residue stretch at 1041-1295 folds into the Glutamine amidotransferase type-1 domain; sequence KVAVLREQGG…IFRNARKQLG (255 aa). Cys-1135 (nucleophile) is an active-site residue. Catalysis depends on residues His-1260 and Glu-1262.

The protein in the N-terminal section; belongs to the FGAMS family. Monomer.

It localises to the cytoplasm. It catalyses the reaction N(2)-formyl-N(1)-(5-phospho-beta-D-ribosyl)glycinamide + L-glutamine + ATP + H2O = 2-formamido-N(1)-(5-O-phospho-beta-D-ribosyl)acetamidine + L-glutamate + ADP + phosphate + H(+). It participates in purine metabolism; IMP biosynthesis via de novo pathway; 5-amino-1-(5-phospho-D-ribosyl)imidazole from N(2)-formyl-N(1)-(5-phospho-D-ribosyl)glycinamide: step 1/2. Its function is as follows. Phosphoribosylformylglycinamidine synthase involved in the purines biosynthetic pathway. Catalyzes the ATP-dependent conversion of formylglycinamide ribonucleotide (FGAR) and glutamine to yield formylglycinamidine ribonucleotide (FGAM) and glutamate. This chain is Phosphoribosylformylglycinamidine synthase, found in Salmonella choleraesuis (strain SC-B67).